Here is a 171-residue protein sequence, read N- to C-terminus: NADH-quinone oxidoreductase subunit I 1 (171 aa).

4Fe-4S ferredoxin-type domains follow at residues 41–71 (LSRD…LQAT) and 81–110 (EFFR…LTPD). Residues Cys51, Cys54, Cys57, Cys61, Cys90, Cys93, Cys96, and Cys100 each contribute to the [4Fe-4S] cluster site.

It belongs to the complex I 23 kDa subunit family. As to quaternary structure, NDH-1 is composed of 14 different subunits. Subunits NuoA, H, J, K, L, M, N constitute the membrane sector of the complex. It depends on [4Fe-4S] cluster as a cofactor.

Its subcellular location is the cell inner membrane. The enzyme catalyses a quinone + NADH + 5 H(+)(in) = a quinol + NAD(+) + 4 H(+)(out). NDH-1 shuttles electrons from NADH, via FMN and iron-sulfur (Fe-S) centers, to quinones in the respiratory chain. The immediate electron acceptor for the enzyme in this species is believed to be ubiquinone. Couples the redox reaction to proton translocation (for every two electrons transferred, four hydrogen ions are translocated across the cytoplasmic membrane), and thus conserves the redox energy in a proton gradient. The polypeptide is NADH-quinone oxidoreductase subunit I 1 (Nitrosospira multiformis (strain ATCC 25196 / NCIMB 11849 / C 71)).